A 285-amino-acid chain; its full sequence is Release factor glutamine methyltransferase (285 aa).

S-adenosyl-L-methionine contacts are provided by residues 119–123 (GTGSG), Glu142, Trp175, and Asn191. Residue 191 to 194 (NPPY) participates in substrate binding.

Belongs to the protein N5-glutamine methyltransferase family. PrmC subfamily.

It catalyses the reaction L-glutaminyl-[peptide chain release factor] + S-adenosyl-L-methionine = N(5)-methyl-L-glutaminyl-[peptide chain release factor] + S-adenosyl-L-homocysteine + H(+). Its function is as follows. Methylates the class 1 translation termination release factors RF1/PrfA and RF2/PrfB on the glutamine residue of the universally conserved GGQ motif. In Burkholderia pseudomallei (strain K96243), this protein is Release factor glutamine methyltransferase.